Here is a 506-residue protein sequence, read N- to C-terminus: Cysteine--tRNA ligase (506 aa).

Residue Cys-34 coordinates Zn(2+). Residues 36-46 carry the 'HIGH' region motif; the sequence is PTVYDFAHIGN. Residues Cys-230, His-269, and Glu-273 each contribute to the Zn(2+) site. Residues 302-306 carry the 'KMSKS' region motif; sequence KMSKS. ATP is bound at residue Lys-305.

This sequence belongs to the class-I aminoacyl-tRNA synthetase family. Monomer. The cofactor is Zn(2+).

The protein localises to the cytoplasm. It catalyses the reaction tRNA(Cys) + L-cysteine + ATP = L-cysteinyl-tRNA(Cys) + AMP + diphosphate. This Brucella suis biovar 1 (strain 1330) protein is Cysteine--tRNA ligase.